The sequence spans 235 residues: Proteasome subunit alpha type-2-A (235 aa).

Residue Lys64 forms a Glycyl lysine isopeptide (Lys-Gly) (interchain with G-Cter in ubiquitin) linkage.

This sequence belongs to the peptidase T1A family. Component of the 20S core complex of the 26S proteasome. The 26S proteasome is composed of a core protease (CP), known as the 20S proteasome, capped at one or both ends by the 19S regulatory particle (RP/PA700). The 20S proteasome core is composed of 28 subunits that are arranged in four stacked rings, resulting in a barrel-shaped structure. The two end rings are each formed by seven alpha subunits, and the two central rings are each formed by seven beta subunits. The catalytic chamber with the active sites is on the inside of the barrel.

The protein resides in the cytoplasm. It is found in the nucleus. Its function is as follows. The proteasome is a multicatalytic proteinase complex which is characterized by its ability to cleave peptides with Arg, Phe, Tyr, Leu, and Glu adjacent to the leaving group at neutral or slightly basic pH. The proteasome has an ATP-dependent proteolytic activity. The chain is Proteasome subunit alpha type-2-A (PAB1) from Arabidopsis thaliana (Mouse-ear cress).